A 219-amino-acid chain; its full sequence is MPPPETMFCAQQINIPPELPDILKQFTKAAIRTQPHDLLQWSAAYFDSLSKGEPLPVKDRVELQVATQKTDSGLTPGLLKVLNKQLSSKMSVKIADLKQKWTDLCLPEEQLQNILGLDNFQDDIDWLKFLSLGCSALGGSISSALKYACEILTEDPEGGAAHIPFDTFTYIYKYLAHIDGDISEMQIEDVLNVLQSEAERQNGLIQPRNFLSSQCPLLS.

The region spanning Pro-17–Pro-54 is the RIIa domain.

Belongs to the ropporin family. As to quaternary structure, component of axonemal radial spoke complexes.

The protein localises to the cell projection. It localises to the cilium. The protein resides in the flagellum. Functions as part of axonemal radial spoke complexes that play an important part in the motility of sperm and cilia. Important for male fertility. Involved in fibrous sheath integrity and sperm motility, plays a role in PKA-dependent signaling processes required for spermatozoa capacitation. This Xenopus laevis (African clawed frog) protein is Ropporin-1-like protein (ropn1l).